Reading from the N-terminus, the 415-residue chain is Gamma-glutamyl phosphate reductase (415 aa).

The protein belongs to the gamma-glutamyl phosphate reductase family.

It is found in the cytoplasm. It catalyses the reaction L-glutamate 5-semialdehyde + phosphate + NADP(+) = L-glutamyl 5-phosphate + NADPH + H(+). The protein operates within amino-acid biosynthesis; L-proline biosynthesis; L-glutamate 5-semialdehyde from L-glutamate: step 2/2. Catalyzes the NADPH-dependent reduction of L-glutamate 5-phosphate into L-glutamate 5-semialdehyde and phosphate. The product spontaneously undergoes cyclization to form 1-pyrroline-5-carboxylate. This chain is Gamma-glutamyl phosphate reductase, found in Listeria monocytogenes serotype 4b (strain F2365).